A 356-amino-acid polypeptide reads, in one-letter code: Putative KilA-N domain-containing protein R878 (356 aa).

Positions 1-12 (MKVRKSNNKPLK) are enriched in basic residues. A disordered region spans residues 1–114 (MKVRKSNNKP…DDDGSDNNVY (114 aa)). Low complexity predominate over residues 14 to 46 (SASFTSGTKTGSKSAKSVNSGSKSMKSTKSSSK). Over residues 66–114 (SDNDELSDNEISDNESSDDDEISDNESSDDDEISDNEISDDDGSDNNVY) the composition is skewed to acidic residues. One can recognise a KilA-N domain in the interval 130–239 (NYSKGKFGNF…VRIGFCMEEW (110 aa)).

The protein is Putative KilA-N domain-containing protein R878 of Acanthamoeba polyphaga (Amoeba).